Here is a 318-residue protein sequence, read N- to C-terminus: Ribonuclease Z (318 aa).

Zn(2+) contacts are provided by His62, His64, Asp66, His67, His144, Asp215, and His273. Catalysis depends on Asp66, which acts as the Proton acceptor.

Belongs to the RNase Z family. As to quaternary structure, homodimer. Zn(2+) serves as cofactor.

The enzyme catalyses Endonucleolytic cleavage of RNA, removing extra 3' nucleotides from tRNA precursor, generating 3' termini of tRNAs. A 3'-hydroxy group is left at the tRNA terminus and a 5'-phosphoryl group is left at the trailer molecule.. In terms of biological role, zinc phosphodiesterase, which displays some tRNA 3'-processing endonuclease activity. Probably involved in tRNA maturation, by removing a 3'-trailer from precursor tRNA. The sequence is that of Ribonuclease Z from Prochlorococcus marinus (strain MIT 9303).